We begin with the raw amino-acid sequence, 220 residues long: Putative tyrosine-protein phosphatase 1 (220 aa).

A Tyrosine-protein phosphatase domain is found at 67–218 (FKVPLNAELF…LLARKHVRGQ (152 aa)).

This sequence belongs to the protein-tyrosine phosphatase family. Non-receptor class CDC14 subfamily.

It catalyses the reaction O-phospho-L-tyrosyl-[protein] + H2O = L-tyrosyl-[protein] + phosphate. Functionally, could be inactive as the active site cysteine is modified to tryptophan. The polypeptide is Putative tyrosine-protein phosphatase 1 (PTP-1) (Orgyia pseudotsugata multicapsid polyhedrosis virus (OpMNPV)).